The sequence spans 161 residues: Transcriptional repressor NrdR (161 aa).

Polar residues predominate over residues 1–11 (MRCPSCNSLDT). The interval 1-20 (MRCPSCNSLDTQVKDSRPTE) is disordered. A zinc finger lies at 3-34 (CPSCNSLDTQVKDSRPTEDSSVIRRRRVCVTC). Residues 49–139 (LTVIKRNGRR…VYRNFREAKD (91 aa)) enclose the ATP-cone domain.

It belongs to the NrdR family. It depends on Zn(2+) as a cofactor.

Its function is as follows. Negatively regulates transcription of bacterial ribonucleotide reductase nrd genes and operons by binding to NrdR-boxes. The polypeptide is Transcriptional repressor NrdR (Bradyrhizobium sp. (strain BTAi1 / ATCC BAA-1182)).